Reading from the N-terminus, the 215-residue chain is NADH-quinone oxidoreductase subunit C (215 aa).

Belongs to the complex I 30 kDa subunit family. NDH-1 is composed of 14 different subunits. Subunits NuoB, C, D, E, F, and G constitute the peripheral sector of the complex.

It localises to the cell inner membrane. It catalyses the reaction a quinone + NADH + 5 H(+)(in) = a quinol + NAD(+) + 4 H(+)(out). NDH-1 shuttles electrons from NADH, via FMN and iron-sulfur (Fe-S) centers, to quinones in the respiratory chain. The immediate electron acceptor for the enzyme in this species is believed to be ubiquinone. Couples the redox reaction to proton translocation (for every two electrons transferred, four hydrogen ions are translocated across the cytoplasmic membrane), and thus conserves the redox energy in a proton gradient. The protein is NADH-quinone oxidoreductase subunit C of Bordetella parapertussis (strain 12822 / ATCC BAA-587 / NCTC 13253).